Consider the following 307-residue polypeptide: Protoheme IX farnesyltransferase (307 aa).

The next 8 membrane-spanning stretches (helical) occupy residues 32 to 52 (MGIV…ALHF), 65 to 85 (FFTI…NNYI), 108 to 128 (PGFA…FLLL), 131 to 151 (PMAV…YSLW), 158 to 178 (LNTV…WAAI), 186 to 206 (IAWM…LALA), 251 to 271 (LGIT…VLGF), and 287 to 307 (FVYS…VTFF).

Belongs to the UbiA prenyltransferase family. Protoheme IX farnesyltransferase subfamily. As to quaternary structure, interacts with CtaA.

It localises to the cell membrane. It catalyses the reaction heme b + (2E,6E)-farnesyl diphosphate + H2O = Fe(II)-heme o + diphosphate. Its pathway is porphyrin-containing compound metabolism; heme O biosynthesis; heme O from protoheme: step 1/1. Its function is as follows. Converts heme B (protoheme IX) to heme O by substitution of the vinyl group on carbon 2 of heme B porphyrin ring with a hydroxyethyl farnesyl side group. This is Protoheme IX farnesyltransferase from Bacillus anthracis (strain A0248).